A 380-amino-acid chain; its full sequence is MIVQFVALLLLNLLQIIAAESSHTNNWAVLISTSRFWFNYRHTANVLGIYRSVKRLGIPDSQIILMIADDYACNSRNLFPGTVFDNADRALDLYGEEIEIDYKGYEVTVEAFIRLLTERVPENTPASKRLLTNERSNILIYMTGHGGDGFIKFQDAEELSSEDLADAIEQIHQHKRYNEILFMVDTCQANSLYTKIYSPNVLAIGSSEVGTSSYSHHADIDIGVAVIDRFTFSNLEFLENRVDSKSKLTMQDLINSYNPYEIHSTPGVQPINLRRSPDDILITDFFGNVRDIELHSEKINWMLPGENTTKPSIKRNSFVFQAQNDMQDDGKGFGISNLKSFLPPTRELKYKKHPISRIISAVVCISFSIGFPYYASKYLK.

The signal sequence occupies residues 1-19; sequence MIVQFVALLLLNLLQIIAA. Topologically, residues 20–354 are lumenal; sequence ESSHTNNWAV…TRELKYKKHP (335 aa). Active-site residues include H145 and C187. N307 carries an N-linked (GlcNAc...) asparagine glycan. A helical transmembrane segment spans residues 355 to 375; the sequence is ISRIISAVVCISFSIGFPYYA. Over 376-380 the chain is Cytoplasmic; that stretch reads SKYLK.

This sequence belongs to the peptidase C13 family. As to quaternary structure, forms a complex with PIG-T homolog, PIG-U homolog and PIG-S homolog. Post-translationally, the disulfide bond between PIGK/GPI8 and PIGT is important for normal enzyme activity.

The protein resides in the endoplasmic reticulum membrane. It functions in the pathway glycolipid biosynthesis; glycosylphosphatidylinositol-anchor biosynthesis. Its function is as follows. Mediates GPI anchoring in the endoplasmic reticulum, by replacing a protein's C-terminal GPI attachment signal peptide with a pre-assembled GPI. During this transamidation reaction, the GPI transamidase forms a carbonyl intermediate with the substrate protein. The chain is GPI-anchor transamidase (gpi8) from Schizosaccharomyces pombe (strain 972 / ATCC 24843) (Fission yeast).